The following is a 188-amino-acid chain: MIFKDYDFLQNYDLKNFEEKVKIYKELLSKFNRIHNLTHLKNIDENIFDSIKILDFYDFSKAKNIADIGSGAGFPVVFLAFLLQSNFHLFEPNPKKAAFLRTLKIECELPNLHIYKEKVQEYKNTFKADIITSRALMDVKPLLEICKNLKDENTVFILWKGSEIYQELENIKDYEIFENNLRRYCILK.

S-adenosyl-L-methionine is bound by residues Gly69, Phe74, 119–120 (VQ), and Arg134.

The protein belongs to the methyltransferase superfamily. RNA methyltransferase RsmG family.

The protein resides in the cytoplasm. It carries out the reaction guanosine(527) in 16S rRNA + S-adenosyl-L-methionine = N(7)-methylguanosine(527) in 16S rRNA + S-adenosyl-L-homocysteine. In terms of biological role, specifically methylates the N7 position of guanine in position 527 of 16S rRNA. The protein is Ribosomal RNA small subunit methyltransferase G of Campylobacter jejuni subsp. jejuni serotype O:2 (strain ATCC 700819 / NCTC 11168).